A 129-amino-acid polypeptide reads, in one-letter code: GEL complex subunit OPTI (129 aa).

Residues 1–44 lie on the Cytoplasmic side of the membrane; sequence MSGGRRKEEPPQPQLANGALKVSVWSKVLRSDAAWEDKDEFLDV. Residues 45-65 form a helical membrane-spanning segment; that stretch reads IYWFRQIIAVVLGVIWGVLPL. A topological domain (lumenal) is located at residue arginine 66. The chain crosses the membrane as a helical span at residues 67–84; it reads GFLGIAGFCVINAGVLYL. At 85–103 the chain is on the cytoplasmic side; sequence YFSNYLQIDEEEYGGTWEL. A helical transmembrane segment spans residues 104–127; that stretch reads TKEGFMTSFALFMVIWIIFYTAIH. The Lumenal portion of the chain corresponds to 128 to 129; it reads YD.

This sequence belongs to the EMC6 family. Component of the GET- and EMC-like (GEL) complex, composed of RAB5IF/OPTI and TMCO1. The GEL complex is part of the multi-pass translocon (MPT) complex, composed of three subcomplexes, the GEL complex (composed of RAB5IF/OPTI and TMCO1), the BOS complex (composed of NCLN/Nicalin, NOMO1 and TMEM147) and the PAT complex (composed of WDR83OS/Asterix and CCDC47). The MPT complex associates with the SEC61 complex. Interacts with NDUFS3, NDUFA4, NDUFV1, NDUFA9 and NDUFS8 of the mitochondrial membrane respiratory chain NADH dehydrogenase (Complex I). Interacts with UQCRC2 of the ubiquinol-cytochrome c reductase complex (Complex III). Interacts with COX5A and COX7C of the cytochrome c oxidase complex (Complex IV).

It localises to the endoplasmic reticulum membrane. It is found in the mitochondrion inner membrane. Its function is as follows. Component of the multi-pass translocon (MPT) complex that mediates insertion of multi-pass membrane proteins into the lipid bilayer of membranes. The MPT complex takes over after the SEC61 complex: following membrane insertion of the first few transmembrane segments of proteins by the SEC61 complex, the MPT complex occludes the lateral gate of the SEC61 complex to promote insertion of subsequent transmembrane regions. Within the MPT complex, the GEL subcomplex may mediate insertion of transmembrane regions into the membrane. In addition to its role in multi-pass membrane insertion, RAB5IF/OPTI also acts as an assembly factor for mitochondrial respiratory complexes. This chain is GEL complex subunit OPTI (RAB5IF), found in Canis lupus familiaris (Dog).